The chain runs to 298 residues: Acetylglutamate kinase (298 aa).

Substrate is bound by residues 66–67 (GG), arginine 88, and asparagine 193.

The protein belongs to the acetylglutamate kinase family. ArgB subfamily.

The protein resides in the cytoplasm. The enzyme catalyses N-acetyl-L-glutamate + ATP = N-acetyl-L-glutamyl 5-phosphate + ADP. Its pathway is amino-acid biosynthesis; L-arginine biosynthesis; N(2)-acetyl-L-ornithine from L-glutamate: step 2/4. In terms of biological role, catalyzes the ATP-dependent phosphorylation of N-acetyl-L-glutamate. This is Acetylglutamate kinase from Methanosphaera stadtmanae (strain ATCC 43021 / DSM 3091 / JCM 11832 / MCB-3).